A 461-amino-acid chain; its full sequence is Asparagine--tRNA ligase (461 aa).

The protein belongs to the class-II aminoacyl-tRNA synthetase family. As to quaternary structure, homodimer.

The protein resides in the cytoplasm. The catalysed reaction is tRNA(Asn) + L-asparagine + ATP = L-asparaginyl-tRNA(Asn) + AMP + diphosphate + H(+). This chain is Asparagine--tRNA ligase, found in Solibacter usitatus (strain Ellin6076).